Reading from the N-terminus, the 340-residue chain is Glycerol-3-phosphate dehydrogenase [NAD(P)+] (340 aa).

4 residues coordinate NADPH: serine 11, tryptophan 12, arginine 33, and lysine 106. The sn-glycerol 3-phosphate site is built by lysine 106, glycine 137, and serine 139. Alanine 141 provides a ligand contact to NADPH. Lysine 192, aspartate 245, serine 255, arginine 256, and asparagine 257 together coordinate sn-glycerol 3-phosphate. Residue lysine 192 is the Proton acceptor of the active site. Residue arginine 256 coordinates NADPH. Valine 280 and glutamate 282 together coordinate NADPH.

It belongs to the NAD-dependent glycerol-3-phosphate dehydrogenase family.

It localises to the cytoplasm. The enzyme catalyses sn-glycerol 3-phosphate + NAD(+) = dihydroxyacetone phosphate + NADH + H(+). The catalysed reaction is sn-glycerol 3-phosphate + NADP(+) = dihydroxyacetone phosphate + NADPH + H(+). It functions in the pathway membrane lipid metabolism; glycerophospholipid metabolism. Functionally, catalyzes the reduction of the glycolytic intermediate dihydroxyacetone phosphate (DHAP) to sn-glycerol 3-phosphate (G3P), the key precursor for phospholipid synthesis. This chain is Glycerol-3-phosphate dehydrogenase [NAD(P)+], found in Bacillus anthracis (strain A0248).